Here is a 528-residue protein sequence, read N- to C-terminus: Membrane protein insertase YidC (528 aa).

Helical transmembrane passes span 5–25 (VVIA…IFPP), 346–366 (YGIA…PLTH), 416–436 (LPMI…MFSI), and 486–506 (MLAL…GLVL).

This sequence belongs to the OXA1/ALB3/YidC family. Type 1 subfamily. Interacts with the Sec translocase complex via SecD. Specifically interacts with transmembrane segments of nascent integral membrane proteins during membrane integration.

The protein localises to the cell inner membrane. In terms of biological role, required for the insertion and/or proper folding and/or complex formation of integral membrane proteins into the membrane. Involved in integration of membrane proteins that insert both dependently and independently of the Sec translocase complex, as well as at least some lipoproteins. Aids folding of multispanning membrane proteins. The chain is Membrane protein insertase YidC from Geotalea uraniireducens (strain Rf4) (Geobacter uraniireducens).